Here is a 92-residue protein sequence, read N- to C-terminus: Small ribosomal subunit protein uS19 (92 aa).

This sequence belongs to the universal ribosomal protein uS19 family.

Protein S19 forms a complex with S13 that binds strongly to the 16S ribosomal RNA. This chain is Small ribosomal subunit protein uS19, found in Rickettsia typhi (strain ATCC VR-144 / Wilmington).